The following is a 375-amino-acid chain: N-acetyldiaminopimelate deacetylase (375 aa).

The active site involves aspartate 69. Catalysis depends on glutamate 128, which acts as the Proton acceptor.

It belongs to the peptidase M20A family. N-acetyldiaminopimelate deacetylase subfamily.

The enzyme catalyses N-acetyl-(2S,6S)-2,6-diaminopimelate + H2O = (2S,6S)-2,6-diaminopimelate + acetate. Its pathway is amino-acid biosynthesis; L-lysine biosynthesis via DAP pathway; LL-2,6-diaminopimelate from (S)-tetrahydrodipicolinate (acetylase route): step 3/3. Functionally, catalyzes the conversion of N-acetyl-diaminopimelate to diaminopimelate and acetate. In Priestia megaterium (strain ATCC 12872 / QMB1551) (Bacillus megaterium), this protein is N-acetyldiaminopimelate deacetylase.